We begin with the raw amino-acid sequence, 272 residues long: Shikimate dehydrogenase (NADP(+)) (272 aa).

Shikimate is bound by residues 19-21 and Thr66; that span reads SLS. Lys70 acts as the Proton acceptor in catalysis. Glu82 lines the NADP(+) pocket. Residues Asn91 and Asp106 each coordinate shikimate. NADP(+) is bound by residues 129–133, 151–156, and Ile214; these read GAGGA and NRTPEK. Residue Tyr216 coordinates shikimate. Gly237 serves as a coordination point for NADP(+).

The protein belongs to the shikimate dehydrogenase family. As to quaternary structure, homodimer.

It carries out the reaction shikimate + NADP(+) = 3-dehydroshikimate + NADPH + H(+). The protein operates within metabolic intermediate biosynthesis; chorismate biosynthesis; chorismate from D-erythrose 4-phosphate and phosphoenolpyruvate: step 4/7. Functionally, involved in the biosynthesis of the chorismate, which leads to the biosynthesis of aromatic amino acids. Catalyzes the reversible NADPH linked reduction of 3-dehydroshikimate (DHSA) to yield shikimate (SA). The protein is Shikimate dehydrogenase (NADP(+)) of Thermococcus kodakarensis (strain ATCC BAA-918 / JCM 12380 / KOD1) (Pyrococcus kodakaraensis (strain KOD1)).